The sequence spans 184 residues: Lactoylglutathione lyase (184 aa).

Alanine 2 carries the N-acetylalanine modification. A disulfide bridge connects residues cysteine 19 and cysteine 20. One can recognise a VOC domain in the interval 31 to 177 (LLQQTMLRIK…DGYWIEILNP (147 aa)). 2 residues coordinate substrate: glutamine 34 and arginine 38. Glutamine 34 is a Zn(2+) binding site. At lysine 88 the chain carries N6-succinyllysine. A Zn(2+)-binding site is contributed by glutamate 100. Asparagine 104 serves as a coordination point for substrate. Phosphothreonine is present on threonine 107. The substrate site is built by arginine 123 and histidine 127. Histidine 127 is a Zn(2+) binding site. Position 139 is an S-glutathionyl cysteine (cysteine 139). Lysine 148 carries the N6-acetyllysine; alternate modification. N6-succinyllysine; alternate is present on lysine 148. Substrate is bound at residue 157–158 (KM). Glutamate 173 lines the Zn(2+) pocket. The Proton donor/acceptor role is filled by glutamate 173.

The protein belongs to the glyoxalase I family. In terms of assembly, homodimer. The cofactor is Zn(2+). Post-translationally, glutathionylation at Cys-139 inhibits enzyme activity. Phosphorylated at Thr-107 in the presence of CaMK2. However, this is a consensus site for phosphorylation by CK2 so phosphorylation may be mediated by CK2 rather than CaMK2. Phosphorylation is induced by TNF and suppresses the TNF-induced transcriptional activity of NF-kappa-B. In terms of processing, exists in a nitric oxide (NO)-modified form. The exact nature of the modification is unknown, but it suppresses the TNF-induced transcriptional activity of NF-kappa-B.

The enzyme catalyses (R)-S-lactoylglutathione = methylglyoxal + glutathione. It participates in secondary metabolite metabolism; methylglyoxal degradation; (R)-lactate from methylglyoxal: step 1/2. With respect to regulation, subject to competitive inhibition by methyl-gerfelin. Its function is as follows. Catalyzes the conversion of hemimercaptal, formed from methylglyoxal and glutathione, to S-lactoylglutathione. Involved in the regulation of TNF-induced transcriptional activity of NF-kappa-B. Required for normal osteoclastogenesis. The chain is Lactoylglutathione lyase (Glo1) from Mus musculus (Mouse).